The chain runs to 278 residues: HTH-type transcriptional regulator HdfR (278 aa).

One can recognise an HTH lysR-type domain in the interval 1–58 (MDTELLKTFLEVSRTRHFGRAAEALYLTQSAVSFRIRQLENQLGVNLFTRHRNNIRLT). Residues 18–37 (FGRAAEALYLTQSAVSFRIR) constitute a DNA-binding region (H-T-H motif).

It belongs to the LysR transcriptional regulatory family.

Negatively regulates the transcription of the flagellar master operon flhDC by binding to the upstream region of the operon. The chain is HTH-type transcriptional regulator HdfR from Salmonella newport (strain SL254).